We begin with the raw amino-acid sequence, 193 residues long: Chaperone protein TorD (193 aa).

Belongs to the TorD/DmsD family. TorD subfamily.

The protein resides in the cytoplasm. Functionally, involved in the biogenesis of TorA. Acts on TorA before the insertion of the molybdenum cofactor and, as a result, probably favors a conformation of the apoenzyme that is competent for acquiring the cofactor. The chain is Chaperone protein TorD from Histophilus somni (strain 129Pt) (Haemophilus somnus).